The sequence spans 380 residues: Adaptive-response sensory kinase SasA (380 aa).

Positions 20 to 101 are kaiB-like domain, interacts with KaiC; the sequence is LLFVANRPGD…QKVDYWWPRW (82 aa). The region spanning 157-380 is the Histidine kinase domain; it reads LLAHELRNPL…CFHFTLPVYS (224 aa). Position 160 is a phosphohistidine; by autocatalysis (histidine 160).

Homotrimer with a small amount of possible homohexamer; a protein fragment of 109-380 is also a homotrimer. Interacts with KaiC, probably as 1 SasA trimer:1 KaiC homohexamer; unphosphorylated SasA has the highest affinity. Homodimer. Binds to the B-loop in the CI domain of KaiC; SasA and KaiB(fs) compete to bind to the CI domain. Binds preferentially to doubly phosphorylated KaiC. In terms of processing, autophosphorylates, probably on His-160.

It carries out the reaction ATP + protein L-histidine = ADP + protein N-phospho-L-histidine.. Member of the two-component regulatory system SasA/RpaA involved in genome-wide circadian gene expression. One of several clock output pathways. Participates in the Kai clock protein complex, the main circadian regulator in cyanobacteria, via its interaction with KaiC. KaiC enhances the autophosphorylation activity of SasA, which then transfers its phosphate group to RpaA to activate it. In addition to its output function, recruits fold-shifted KaiB (KaiB(fs)) to KaiC to cooperatively form the KaiB(6):KaiC(6) complex (independent of SasA kinase activity). Required for robustness of the circadian rhythm of gene expression and is involved in clock output, also required for adaptation to light/dark cycles. The chain is Adaptive-response sensory kinase SasA from Thermosynechococcus vestitus (strain NIES-2133 / IAM M-273 / BP-1).